Consider the following 427-residue polypeptide: Chitin disaccharide deacetylase (427 aa).

The N-terminal stretch at 1–22 (MKLNKLAIATLVSAALSQYAFA) is a signal peptide. The region spanning 28-326 (GTIYLTFDDG…LAKQAGYVFD (299 aa)) is the NodB homology domain. 2 Chitin-binding type-3 domains span residues 333–375 (PNWQ…SSLW) and 382–419 (TNWT…TPNS).

This sequence belongs to the polysaccharide deacetylase family. Carbohydrate-binding module 12 subfamily.

The enzyme catalyses N,N'-diacetylchitobiose + H2O = N-acetyl-beta-D-glucosaminyl-(1-&gt;4)-D-glucosamine + acetate. Its pathway is glycan degradation; chitin degradation. Functionally, specifically catalyzes the degradation of N,N'-diacetylchitobiose. Key enzyme in the chitin catabolic cascade. The sequence is that of Chitin disaccharide deacetylase (deaA) from Vibrio alginolyticus.